Consider the following 163-residue polypeptide: ATP synthase subunit b (163 aa).

Residues 10-29 (ALYQLLAFSVLLFFLSKFAL) form a helical membrane-spanning segment.

The protein belongs to the ATPase B chain family. F-type ATPases have 2 components, F(1) - the catalytic core - and F(0) - the membrane proton channel. F(1) has five subunits: alpha(3), beta(3), gamma(1), delta(1), epsilon(1). F(0) has three main subunits: a(1), b(2) and c(10-14). The alpha and beta chains form an alternating ring which encloses part of the gamma chain. F(1) is attached to F(0) by a central stalk formed by the gamma and epsilon chains, while a peripheral stalk is formed by the delta and b chains.

Its subcellular location is the cell membrane. F(1)F(0) ATP synthase produces ATP from ADP in the presence of a proton or sodium gradient. F-type ATPases consist of two structural domains, F(1) containing the extramembraneous catalytic core and F(0) containing the membrane proton channel, linked together by a central stalk and a peripheral stalk. During catalysis, ATP synthesis in the catalytic domain of F(1) is coupled via a rotary mechanism of the central stalk subunits to proton translocation. Its function is as follows. Component of the F(0) channel, it forms part of the peripheral stalk, linking F(1) to F(0). This chain is ATP synthase subunit b, found in Alkalihalophilus pseudofirmus (strain ATCC BAA-2126 / JCM 17055 / OF4) (Bacillus pseudofirmus).